Reading from the N-terminus, the 195-residue chain is Pyridoxal 5'-phosphate synthase subunit PdxT (195 aa).

Position 46–48 (46–48 (GES)) interacts with L-glutamine. The active-site Nucleophile is the C78. L-glutamine is bound by residues R107 and 135–136 (IR). Residues H172 and E174 each act as charge relay system in the active site.

This sequence belongs to the glutaminase PdxT/SNO family. In terms of assembly, in the presence of PdxS, forms a dodecamer of heterodimers. Only shows activity in the heterodimer.

It catalyses the reaction aldehydo-D-ribose 5-phosphate + D-glyceraldehyde 3-phosphate + L-glutamine = pyridoxal 5'-phosphate + L-glutamate + phosphate + 3 H2O + H(+). The catalysed reaction is L-glutamine + H2O = L-glutamate + NH4(+). It participates in cofactor biosynthesis; pyridoxal 5'-phosphate biosynthesis. Functionally, catalyzes the hydrolysis of glutamine to glutamate and ammonia as part of the biosynthesis of pyridoxal 5'-phosphate. The resulting ammonia molecule is channeled to the active site of PdxS. This Corynebacterium jeikeium (strain K411) protein is Pyridoxal 5'-phosphate synthase subunit PdxT.